The sequence spans 267 residues: 4-hydroxy-tetrahydrodipicolinate reductase (267 aa).

Residues glycine 12–methionine 17, glycine 100–threonine 102, and alanine 126–phenylalanine 129 contribute to the NAD(+) site. The active-site Proton donor/acceptor is histidine 156. Histidine 157 is a (S)-2,3,4,5-tetrahydrodipicolinate binding site. The active-site Proton donor is the lysine 160. Glycine 166–threonine 167 provides a ligand contact to (S)-2,3,4,5-tetrahydrodipicolinate.

It belongs to the DapB family.

The protein localises to the cytoplasm. The catalysed reaction is (S)-2,3,4,5-tetrahydrodipicolinate + NAD(+) + H2O = (2S,4S)-4-hydroxy-2,3,4,5-tetrahydrodipicolinate + NADH + H(+). It catalyses the reaction (S)-2,3,4,5-tetrahydrodipicolinate + NADP(+) + H2O = (2S,4S)-4-hydroxy-2,3,4,5-tetrahydrodipicolinate + NADPH + H(+). Its pathway is amino-acid biosynthesis; L-lysine biosynthesis via DAP pathway; (S)-tetrahydrodipicolinate from L-aspartate: step 4/4. Catalyzes the conversion of 4-hydroxy-tetrahydrodipicolinate (HTPA) to tetrahydrodipicolinate. In Bacillus licheniformis (strain ATCC 14580 / DSM 13 / JCM 2505 / CCUG 7422 / NBRC 12200 / NCIMB 9375 / NCTC 10341 / NRRL NRS-1264 / Gibson 46), this protein is 4-hydroxy-tetrahydrodipicolinate reductase.